The following is a 694-amino-acid chain: Elongation factor G (694 aa).

The 275-residue stretch at 8–282 (DRLRNIGIMA…AIVDYLPSPL (275 aa)) folds into the tr-type G domain. Residues 17-24 (AHIDAGKT), 81-85 (DTPGH), and 135-138 (NKMD) each bind GTP. Residues 284–303 (IPPVQGTDPETGEPAERKAD) form a disordered region.

Belongs to the TRAFAC class translation factor GTPase superfamily. Classic translation factor GTPase family. EF-G/EF-2 subfamily.

It is found in the cytoplasm. Its function is as follows. Catalyzes the GTP-dependent ribosomal translocation step during translation elongation. During this step, the ribosome changes from the pre-translocational (PRE) to the post-translocational (POST) state as the newly formed A-site-bound peptidyl-tRNA and P-site-bound deacylated tRNA move to the P and E sites, respectively. Catalyzes the coordinated movement of the two tRNA molecules, the mRNA and conformational changes in the ribosome. The polypeptide is Elongation factor G (Symbiobacterium thermophilum (strain DSM 24528 / JCM 14929 / IAM 14863 / T)).